We begin with the raw amino-acid sequence, 588 residues long: Intracellular maltogenic amylase (588 aa).

Asn149, Ser155, Gly174, and Asp176 together coordinate Ca(2+). Residues His249 and Arg325 each coordinate substrate. Residue Asp327 is the Nucleophile of the active site. Glu356 (proton donor) is an active-site residue. Substrate contacts are provided by residues 422-423 (HD), Asp467, and Arg471.

Belongs to the glycosyl hydrolase 13 family. BbmA subfamily. Monomer or homodimer; in equilibrium. Ca(2+) serves as cofactor.

The protein localises to the cytoplasm. Hydrolyzes beta-cyclodextrin to maltose and glucose, soluble starch to maltose and glucose, and pullulan to panose with trace amounts of maltose and glucose. It is also able to hydrolyze acarbose. Can also exhibit a transglycosylation activity transferring glucose or maltose to another moiety of sugars by forming alpha-(1,6)- and alpha-(1,3)-glycosidic linkages upon the hydrolysis of substrate at concentrations of 5% or higher. This Bacillus subtilis protein is Intracellular maltogenic amylase (bbmA).